The sequence spans 559 residues: Dihydroxy-acid dehydratase (559 aa).

[2Fe-2S] cluster is bound at residue Cys-56. Mg(2+) is bound at residue Asp-88. Cys-129 lines the [2Fe-2S] cluster pocket. Positions 130 and 131 each coordinate Mg(2+). Lys-131 bears the N6-carboxylysine mark. Cys-198 contributes to the [2Fe-2S] cluster binding site. Glu-449 lines the Mg(2+) pocket. The Proton acceptor role is filled by Ser-475.

This sequence belongs to the IlvD/Edd family. As to quaternary structure, homodimer. [2Fe-2S] cluster is required as a cofactor. Mg(2+) serves as cofactor.

It catalyses the reaction (2R)-2,3-dihydroxy-3-methylbutanoate = 3-methyl-2-oxobutanoate + H2O. It carries out the reaction (2R,3R)-2,3-dihydroxy-3-methylpentanoate = (S)-3-methyl-2-oxopentanoate + H2O. The protein operates within amino-acid biosynthesis; L-isoleucine biosynthesis; L-isoleucine from 2-oxobutanoate: step 3/4. It functions in the pathway amino-acid biosynthesis; L-valine biosynthesis; L-valine from pyruvate: step 3/4. Its function is as follows. Functions in the biosynthesis of branched-chain amino acids. Catalyzes the dehydration of (2R,3R)-2,3-dihydroxy-3-methylpentanoate (2,3-dihydroxy-3-methylvalerate) into 2-oxo-3-methylpentanoate (2-oxo-3-methylvalerate) and of (2R)-2,3-dihydroxy-3-methylbutanoate (2,3-dihydroxyisovalerate) into 2-oxo-3-methylbutanoate (2-oxoisovalerate), the penultimate precursor to L-isoleucine and L-valine, respectively. This is Dihydroxy-acid dehydratase from Ruthia magnifica subsp. Calyptogena magnifica.